The chain runs to 170 residues: Transcription factor E (170 aa).

Residues 1 to 93 (MKDVYLYIVE…TWYVNDEVIS (93 aa)) enclose the HTH TFE/IIEalpha-type domain.

Belongs to the TFE family. Monomer. Interaction with RNA polymerase subunits RpoF and RpoE is necessary for Tfe stimulatory transcription activity. Able to interact with Tbp and RNA polymerase in the absence of DNA promoter. Interacts both with the preinitiation and elongation complexes.

Functionally, transcription factor that plays a role in the activation of archaeal genes transcribed by RNA polymerase. Facilitates transcription initiation by enhancing TATA-box recognition by TATA-box-binding protein (Tbp), and transcription factor B (Tfb) and RNA polymerase recruitment. Not absolutely required for transcription in vitro, but particularly important in cases where Tbp or Tfb function is not optimal. It dynamically alters the nucleic acid-binding properties of RNA polymerases by stabilizing the initiation complex and destabilizing elongation complexes. Seems to translocate with the RNA polymerase following initiation and acts by binding to the non template strand of the transcription bubble in elongation complexes. The sequence is that of Transcription factor E from Pyrobaculum calidifontis (strain DSM 21063 / JCM 11548 / VA1).